Consider the following 331-residue polypeptide: MFTCINCTKMADRGEEDEEDEARGSTTPNTKEAVKSLTTQIKDMASKFSGSHKQSKPTPGSSSSNLRKFPDFDTASESVPYPYPGGSTSSTPAWDLPRSSYHQSGRPDSRFTSMYGGERESISAQSCDVVLEDDEPKEWMAQVEPGVHITFVSLPSGGNDLKRIRFSREVFDKWQAQRWWGENYDRIVELYNVQRFNRQALQTPGRSEDQSQRDSTYTRIDSARESRDWTQRDNNFRPPGGSVPHHFYGPPMDAARITTSSRDEPPSMSNASEMQGEWVEEDEPGVYITIRQLPDGTRELRRVRFSRERFGEVHAKTWWEQNRDRIQTQYL.

The segment at 1–111 (MFTCINCTKM…HQSGRPDSRF (111 aa)) is disordered. 2 stretches are compositionally biased toward polar residues: residues 25-41 (STTP…TTQI) and 48-66 (FSGS…SSNL). One can recognise a BRX 1 domain in the interval 137 to 192 (KEWMAQVEPGVHITFVSLPSGGNDLKRIRFSREVFDKWQAQRWWGENYDRIVELYN). Disordered stretches follow at residues 201-246 (LQTP…VPHH) and 258-279 (TTSS…GEWV). Residues 221–235 (DSARESRDWTQRDNN) are compositionally biased toward basic and acidic residues. The 56-residue stretch at 276–331 (GEWVEEDEPGVYITIRQLPDGTRELRRVRFSRERFGEVHAKTWWEQNRDRIQTQYL) folds into the BRX 2 domain.

The protein belongs to the BRX family. Heterodimer with BRXL1. As to expression, expressed in roots.

The protein resides in the nucleus. May act as a regulator of cell proliferation and elongation in the root. In Arabidopsis thaliana (Mouse-ear cress), this protein is Protein Brevis radix-like 1 (BRXL1).